The sequence spans 205 residues: Urease accessory protein UreG (205 aa).

14–21 contributes to the GTP binding site; the sequence is GPVGSGKT.

It belongs to the SIMIBI class G3E GTPase family. UreG subfamily. In terms of assembly, homodimer. UreD, UreF and UreG form a complex that acts as a GTP-hydrolysis-dependent molecular chaperone, activating the urease apoprotein by helping to assemble the nickel containing metallocenter of UreC. The UreE protein probably delivers the nickel.

It is found in the cytoplasm. Functionally, facilitates the functional incorporation of the urease nickel metallocenter. This process requires GTP hydrolysis, probably effectuated by UreG. This is Urease accessory protein UreG from Proteus mirabilis (strain HI4320).